We begin with the raw amino-acid sequence, 96 residues long: Auxin-responsive protein SAUR29 (96 aa).

Belongs to the ARG7 family.

It localises to the cell membrane. Functionally, functions as a positive effector of cell expansion through modulation of auxin transport. Involved in thermo-responsiveness of plant architecture. Enhances plasma membrane H(+)-ATPase. This chain is Auxin-responsive protein SAUR29, found in Arabidopsis thaliana (Mouse-ear cress).